We begin with the raw amino-acid sequence, 687 residues long: MSIRYPLLNRELGILGFNERVLAQAADPAVPLLERLRFICITSSNLDEFFEVRMAGLQEQMRDNPGALSPDGMSLQHVYDLVVERAQKLVHRQYTMLHDTVLTALEAEGIYFHGTEAWNEAQTEWARNYFFDELLPVLTPIGLDPAHPFPRVLNKSLNFVVELEGKDAFGRQAMMGIVQAPRALPRLVRMPQELSGYPHGFVLLSSLLQRFVGELFPNLVVRSCNQFRITRNSELFVDEDEITNLRVALQGELPARHLGNAVRLEVSAETPTHVVRRLLDESGLSDKDCYYADGPVNLVRLMQLPEMVDRPDLKFVPHIPAIPAQVANSVSMFDVIDQGDVLLHHPYESFQPVLELLLQAAKDPNVVAIKQTIYRTGTDSPLMDALMQAARNGKEVTVVVELLARFDEETNINWASQLEAVGAHVVYGVVGHKCHAKMMLIVRRVSVGGKTTLKRYVHLGTGNYHPRTARLYTDFGLMTADQKICEDVHHVFQQLTGIGGELKLHELWQSPFTLHPKLVEAIRAEAEHARAGKKARIVAKMNALLEPTVIAELYEAAQAGVKIDLIVRGVCSLQPGVAGLSENITVRSIVGRFLEHHRIFYFYDGGKEQVYLSSADWMDRNFFRRVEVAFPINNRRLKRRVIAEGLSAFLGDNQSAWLMQSDGHYRRRRPGKSSRNAQMSLLGKFCS.

Asn-45 contributes to the ATP binding site. Mg(2+) contacts are provided by Arg-375 and Arg-405. Catalysis depends on His-435, which acts as the Phosphohistidine intermediate. The ATP site is built by Tyr-472, Arg-568, and His-596.

This sequence belongs to the polyphosphate kinase 1 (PPK1) family. Requires Mg(2+) as cofactor. In terms of processing, an intermediate of this reaction is the autophosphorylated ppk in which a phosphate is covalently linked to a histidine residue through a N-P bond.

The catalysed reaction is [phosphate](n) + ATP = [phosphate](n+1) + ADP. Catalyzes the reversible transfer of the terminal phosphate of ATP to form a long-chain polyphosphate (polyP). The sequence is that of Polyphosphate kinase from Paraburkholderia phytofirmans (strain DSM 17436 / LMG 22146 / PsJN) (Burkholderia phytofirmans).